The sequence spans 359 residues: MITVNVDLGERAYPIHIGAGLIGRTDLFAPHITGSSVTIVTNTTVDPLYGDALRAALAPLGKRVSTVVLPDGEAYKNWETLNLIFDGLLTERADRKTTLVALGGGVIGDMTGFAAACYMRGVPFIQVPTTLLSQVDSSVGGKTGINHPLGKNMIGAFYQPQAVIADIGALTTLPDRELAAGVAEVIKTGAIADAAFFDWIEANVDALNRREPAALAHAVKRSCEIKASVVAADEREGGLRAILNFGHTFGHAIEAGLGYGEWLHGEAVGCGMVMAADLSVRLGLLDEASRQRLDAVIAAAHLPVRGPALGDARYMELMRVDKKAEAGAIKFILLKRFGDTLITQAPDEAVFATLAQTTR.

NAD(+)-binding positions include 71-76 (DGEAYK), 105-109 (GVIGD), 129-130 (TT), Lys142, and Lys151. Residues Glu184, His247, and His264 each coordinate Zn(2+).

Belongs to the sugar phosphate cyclases superfamily. Dehydroquinate synthase family. Co(2+) serves as cofactor. Zn(2+) is required as a cofactor. It depends on NAD(+) as a cofactor.

It is found in the cytoplasm. It carries out the reaction 7-phospho-2-dehydro-3-deoxy-D-arabino-heptonate = 3-dehydroquinate + phosphate. The protein operates within metabolic intermediate biosynthesis; chorismate biosynthesis; chorismate from D-erythrose 4-phosphate and phosphoenolpyruvate: step 2/7. Its function is as follows. Catalyzes the conversion of 3-deoxy-D-arabino-heptulosonate 7-phosphate (DAHP) to dehydroquinate (DHQ). This is 3-dehydroquinate synthase from Burkholderia ambifaria (strain ATCC BAA-244 / DSM 16087 / CCUG 44356 / LMG 19182 / AMMD) (Burkholderia cepacia (strain AMMD)).